A 96-amino-acid polypeptide reads, in one-letter code: Small ribosomal subunit protein bS6 (96 aa).

This sequence belongs to the bacterial ribosomal protein bS6 family.

Binds together with bS18 to 16S ribosomal RNA. This Streptococcus thermophilus (strain ATCC BAA-491 / LMD-9) protein is Small ribosomal subunit protein bS6.